A 554-amino-acid chain; its full sequence is Methyl-coenzyme M reductase II subunit alpha (554 aa).

Glutamine 151 contributes to the coenzyme F430 binding site. Residues arginine 229, 260-261 (KH), and arginine 274 each bind coenzyme B. Coenzyme M contacts are provided by tyrosine 336 and tyrosine 447.

It belongs to the methyl-coenzyme M reductase alpha subunit family. MCR is a hexamer of two alpha, two beta, and two gamma chains, forming a dimer of heterotrimers. Coenzyme F430 is required as a cofactor.

The enzyme catalyses coenzyme B + methyl-coenzyme M = methane + coenzyme M-coenzyme B heterodisulfide. It participates in one-carbon metabolism; methyl-coenzyme M reduction; methane from methyl-coenzyme M: step 1/1. Component of the methyl-coenzyme M reductase (MCR) I that catalyzes the reductive cleavage of methyl-coenzyme M (CoM-S-CH3 or 2-(methylthio)ethanesulfonate) using coenzyme B (CoB or 7-mercaptoheptanoylthreonine phosphate) as reductant which results in the production of methane and the mixed heterodisulfide of CoB and CoM (CoM-S-S-CoB). This is the final step in methanogenesis. The polypeptide is Methyl-coenzyme M reductase II subunit alpha (mrtA) (Methanothermus fervidus (strain ATCC 43054 / DSM 2088 / JCM 10308 / V24 S)).